The sequence spans 594 residues: APOBEC1 complementation factor (594 aa).

RRM domains are found at residues 56 to 134, 136 to 218, and 231 to 303; these read CEIF…ASVD, CRLF…WAEP, and KILY…LAKP. Residues 360 to 409 form a required for nuclear localization region; that stretch reads HFPATKGHLSNRAIIRAPSVREIYMNVPVGAAGVRGLGGRGYLAYTGLGR. Phosphothreonine is present on T499.

As to quaternary structure, part of the apolipoprotein B mRNA editing complex with APOBEC1. Interacts with TNPO2; TNPO2 may be responsible for transport of A1CF into the nucleus. Interacts with SYNCRIP. Interacts with CELF2/CUGBP2. Interacts with RBM47. As to expression, widely expressed with highest levels in brain, liver, pancreas, colon and spleen.

The protein localises to the nucleus. It is found in the endoplasmic reticulum. It localises to the cytoplasm. In terms of biological role, essential component of the apolipoprotein B mRNA editing enzyme complex which is responsible for the postranscriptional editing of a CAA codon for Gln to a UAA codon for stop in APOB mRNA. Binds to APOB mRNA and is probably responsible for docking the catalytic subunit, APOBEC1, to the mRNA to allow it to deaminate its target cytosine. The complex also protects the edited APOB mRNA from nonsense-mediated decay. The sequence is that of APOBEC1 complementation factor (A1CF) from Homo sapiens (Human).